An 893-amino-acid polypeptide reads, in one-letter code: Sulfate permease 2 (893 aa).

The disordered stretch occupies residues 1–25 (MSREGYPNFEEVEIPDFQETNNTVP). Topologically, residues 1-131 (MSREGYPNFE…VFPIINWLPH (131 aa)) are cytoplasmic. Residues 132 to 152 (YNFSWFTADLIAGITIGCVLV) form a helical membrane-spanning segment. At 153-163 (PQSMSYAQVAT) the chain is on the extracellular side. A helical transmembrane segment spans residues 164–184 (LPAQYGLYSSFIGAYSYSFFA). The Cytoplasmic portion of the chain corresponds to 185–188 (TSKD). A helical membrane pass occupies residues 189–209 (VCIGPVAVMSLQTAKVIADVT). At 210 to 221 (AKYPDGDSAITG) the chain is on the extracellular side. The chain crosses the membrane as a helical span at residues 222–242 (PVIATTLALLCGIISAAVGFL). Residues 243–244 (RL) are Cytoplasmic-facing. The chain crosses the membrane as a helical span at residues 245-265 (GFLVELISLNAVAGFMTGSAF). Topologically, residues 266 to 305 (NILWGQVPALMGYNSLVNTRAATYKVVIETLKHLPDTKLD) are extracellular. The helical transmembrane segment at 306-326 (AVFGLIPLFLLYVWKWWCGTY) threads the bilayer. Topologically, residues 327–350 (GPRLNDRYNSKNPRLHKIIKWTYF) are cytoplasmic. The chain crosses the membrane as a helical span at residues 351 to 371 (YAQASRNGIIIIVFTCIGWAI). Residues 372–399 (TRGKSKSERPISILGSVPSGLKEVGVFH) lie on the Extracellular side of the membrane. The chain crosses the membrane as a helical span at residues 400–420 (VPPGLMSKLGPNLPASIIVLL). Over 421-443 (LEHIAISKSFGRINDYKVVPDQE) the chain is Cytoplasmic. The helical transmembrane segment at 444 to 464 (LIAIGVSNLLGTFFNAYPATG) threads the bilayer. Residues 465–483 (SFSRSALKAKCNVRTPLSG) are Extracellular-facing. Residues 484 to 504 (LFSGSCVLLALYCLTGAFFYI) traverse the membrane as a helical segment. The Cytoplasmic portion of the chain corresponds to 505–532 (PKATLSAVIIHAVSDLLASYQTTWNFWK). The helical transmembrane segment at 533–551 (MNPLDFICFIVTVLITVFA) threads the bilayer. The Extracellular segment spans residues 552–559 (SIEDGIYF). Residues 560–580 (AMCWSCAMLILKVAFPAGKFL) traverse the membrane as a helical segment. The Cytoplasmic portion of the chain corresponds to 581–893 (GRVEVAEVTD…DIPDFAKWDI (313 aa)). One can recognise an STAS domain in the interval 676–854 (DVQILPPPDG…SIVAGHTSYH (179 aa)).

It belongs to the SLC26A/SulP transporter (TC 2.A.53) family.

It localises to the membrane. High affinity uptake of sulfate into the cell. The protein is Sulfate permease 2 (SUL2) of Saccharomyces cerevisiae (strain ATCC 204508 / S288c) (Baker's yeast).